The sequence spans 330 residues: GMP reductase (330 aa).

Cys180 acts as the Thioimidate intermediate in catalysis. 209-232 (LIADGGIRHNGDIAKSVRFGASMV) contributes to the NADP(+) binding site.

Belongs to the IMPDH/GMPR family. GuaC type 2 subfamily.

The catalysed reaction is IMP + NH4(+) + NADP(+) = GMP + NADPH + 2 H(+). Its function is as follows. Catalyzes the irreversible NADPH-dependent deamination of GMP to IMP. It functions in the conversion of nucleobase, nucleoside and nucleotide derivatives of G to A nucleotides, and in maintaining the intracellular balance of A and G nucleotides. This chain is GMP reductase, found in Lactobacillus delbrueckii subsp. bulgaricus (strain ATCC BAA-365 / Lb-18).